Consider the following 371-residue polypeptide: tRNA-specific 2-thiouridylase MnmA (371 aa).

Residues G13–S20 and M39 each bind ATP. Positions N99–D101 are interaction with target base in tRNA. C104 acts as the Nucleophile in catalysis. A disulfide bond links C104 and C200. Residue G128 participates in ATP binding. The segment at K150–Q152 is interaction with tRNA. The active-site Cysteine persulfide intermediate is C200. The tract at residues R308–Y309 is interaction with tRNA.

The protein belongs to the MnmA/TRMU family.

Its subcellular location is the cytoplasm. It carries out the reaction S-sulfanyl-L-cysteinyl-[protein] + uridine(34) in tRNA + AH2 + ATP = 2-thiouridine(34) in tRNA + L-cysteinyl-[protein] + A + AMP + diphosphate + H(+). Its function is as follows. Catalyzes the 2-thiolation of uridine at the wobble position (U34) of tRNA, leading to the formation of s(2)U34. The chain is tRNA-specific 2-thiouridylase MnmA from Listeria monocytogenes serotype 4b (strain CLIP80459).